Reading from the N-terminus, the 176-residue chain is MSWRSEQIWIELIPGSRRGSNFVWAFILFFGSLEFILVGTASYFSQNLIAFFPQGMVMIFYGISGLFISLYLSSMLFWNVGGGYNQFDKTRGVICIFRWVFPGRNRRLLLRFFMKDIRSIRIEVKEGFYTRRLLYMDIRGQKAIPLTRTDEVLTPVEIEKKAAELASFLCVPIEVL.

The next 2 membrane-spanning stretches (helical) occupy residues 22–42 and 48–68; these read FVWA…GTAS and LIAF…GLFI.

Belongs to the Ycf4 family.

Its subcellular location is the plastid thylakoid membrane. Functionally, seems to be required for the assembly of the photosystem I complex. The chain is Photosystem I assembly protein Ycf4 from Cuscuta gronovii (Common dodder).